We begin with the raw amino-acid sequence, 500 residues long: Formate-nitrite transporter 3 (500 aa).

Topologically, residues 1–31 are cytoplasmic; it reads MVLAASPEAYRKVIEYGIKKTKLRIDRLFLQ. A helical membrane pass occupies residues 32–52; the sequence is AIMAGIYVGMAGHACTALAGA. Over 53–69 the chain is Extracellular; that stretch reads YSTDPANPLAVSKATQK. The chain crosses the membrane as a helical span at residues 70-90; that stretch reads FLYASLFPVAFIAIIFTGAEL. Over 91-113 the chain is Cytoplasmic; that stretch reads FTGNTMTMLVCLLERRVTALQLC. Residues 114 to 134 form a helical membrane-spanning segment; it reads INWICSLVGNWAGALFAAYFL. Topologically, residues 135-164 are extracellular; it reads SYLPGVLQDPDHLHYLEDVAAHKTELSFLQ. Residues 165–185 form a helical membrane-spanning segment; it reads CFCLAVGCNTFVCLAVWFVIA. Topologically, residues 186 to 192 are cytoplasmic; sequence SDDAAGK. The chain crosses the membrane as a helical span at residues 193 to 213; it reads IMSMWFPIVSFCVAGYEHIIA. Residues 214–237 lie on the Extracellular side of the membrane; sequence NFYTLQCALMHGVGPGVGTVILKN. Residues 238 to 258 traverse the membrane as a helical segment; it reads FIPTLLGNIVGGCGLVGAVYW. Residues 259–500 lie on the Cytoplasmic side of the membrane; sequence YNFYPTVCVV…ALEEHPASTI (242 aa). Residues 411–500 form a disordered region; it reads PLRENSGVPS…ALEEHPASTI (90 aa). Composition is skewed to basic and acidic residues over residues 428–444 and 466–485; these read GRVR…RGGE and FHPH…ETRV.

Belongs to the FNT transporter (TC 1.A.16) family. In terms of assembly, homopentamer.

The protein localises to the cell membrane. It catalyses the reaction (S)-lactate(in) + H(+)(in) = (S)-lactate(out) + H(+)(out). The catalysed reaction is formate(in) + H(+)(in) = formate(out) + H(+)(out). The enzyme catalyses pyruvate(out) + H(+)(out) = pyruvate(in) + H(+)(in). It carries out the reaction acetate(out) + H(+)(out) = acetate(in) + H(+)(in). Inhibited by p-chloromercuribenzene sulfonate (pCMBS). Methyl methanethiosulfonate (MMTS) inhibits L-lactate but not formate transport. Inhibited by the Malaria Box compound MMV007839. Inhibited by BH-296, BH-317, BH-326 and BH-388 compounds. Monocarboxylate-proton symporter; active in acidic-to-neutral pH range. Transports L-lactate and formate. This Toxoplasma gondii (strain ATCC 50611 / Me49) protein is Formate-nitrite transporter 3.